The primary structure comprises 256 residues: 6-carboxyhexanoate--CoA ligase (256 aa).

The protein belongs to the BioW family. In terms of assembly, homodimer. Mg(2+) serves as cofactor.

The enzyme catalyses heptanedioate + ATP + CoA = 6-carboxyhexanoyl-CoA + AMP + diphosphate. The protein operates within metabolic intermediate metabolism; pimeloyl-CoA biosynthesis; pimeloyl-CoA from pimelate: step 1/1. Its function is as follows. Catalyzes the transformation of pimelate into pimeloyl-CoA with concomitant hydrolysis of ATP to AMP. The protein is 6-carboxyhexanoate--CoA ligase of Methanobrevibacter ruminantium (strain ATCC 35063 / DSM 1093 / JCM 13430 / OCM 146 / M1) (Methanobacterium ruminantium).